A 266-amino-acid polypeptide reads, in one-letter code: MDTLKKLKFEANGIIGVLLDYSREPVLTNIIDQFRTSLESNDIELIRYSLEQLKTWYARNRNEIYKNEFVFNEFEHHETENKIKKFLDELPVVDETEKSSITHFSSDQNRELEKKIFISHSSKDKIVCNAFVELLEDIGVSSEDIIYTSSPYHGIPGDEDIFEYLKKHLFKGAYVFYMLSDNYYDSVYCLNEMGATWVNSNNCSTFILPGFKGEIKGVIDKNKKAFSLEEPIDLFNLKEKILRMYDLTLEDKKWERIKAKFNTKLK.

Positions 112–261 constitute a TIR domain; the sequence is LEKKIFISHS…KKWERIKAKF (150 aa). Glu-192 is an active-site residue.

The catalysed reaction is NAD(+) + H2O = ADP-D-ribose + nicotinamide + H(+). This is an uncharacterized protein from Bacillus subtilis (strain 168).